Here is a 225-residue protein sequence, read N- to C-terminus: Orotate phosphoribosyltransferase (225 aa).

Residues Lys26, 73–74 (YK), Arg100, Lys101, Lys104, His106, and 127–135 (EDVTTAGTS) each bind 5-phospho-alpha-D-ribose 1-diphosphate. Orotate-binding residues include Thr131 and Arg160.

Belongs to the purine/pyrimidine phosphoribosyltransferase family. PyrE subfamily. As to quaternary structure, homodimer. Mg(2+) serves as cofactor.

The catalysed reaction is orotidine 5'-phosphate + diphosphate = orotate + 5-phospho-alpha-D-ribose 1-diphosphate. The protein operates within pyrimidine metabolism; UMP biosynthesis via de novo pathway; UMP from orotate: step 1/2. Functionally, catalyzes the transfer of a ribosyl phosphate group from 5-phosphoribose 1-diphosphate to orotate, leading to the formation of orotidine monophosphate (OMP). This is Orotate phosphoribosyltransferase from Lachnoclostridium phytofermentans (strain ATCC 700394 / DSM 18823 / ISDg) (Clostridium phytofermentans).